Reading from the N-terminus, the 473-residue chain is Maltose fermentation regulatory protein MAL63 (473 aa).

A DNA-binding region (zn(2)-C6 fungal-type) is located at residues 8 to 34 (CDCCRVRRVKCDRNKPCNRCIQRNLNC). A Nuclear localization signal motif is present at residues 41–49 (KKRGPKSIR).

Belongs to the MAL13 family.

It is found in the nucleus. Functionally, regulates the coordinate transcription of structural MAL6S (maltase) and MAL6T (maltose permease) genes. The chain is Maltose fermentation regulatory protein MAL63 (MAL63) from Saccharomyces cerevisiae (Baker's yeast).